Reading from the N-terminus, the 255-residue chain is tRNA-cytidine(32) 2-sulfurtransferase (255 aa).

Positions 37–42 (SGGKDS) match the PP-loop motif motif. Residues Cys112, Cys115, and Cys202 each coordinate [4Fe-4S] cluster.

This sequence belongs to the TtcA family. Homodimer. The cofactor is Mg(2+). It depends on [4Fe-4S] cluster as a cofactor.

The protein resides in the cytoplasm. It carries out the reaction cytidine(32) in tRNA + S-sulfanyl-L-cysteinyl-[cysteine desulfurase] + AH2 + ATP = 2-thiocytidine(32) in tRNA + L-cysteinyl-[cysteine desulfurase] + A + AMP + diphosphate + H(+). It participates in tRNA modification. Catalyzes the ATP-dependent 2-thiolation of cytidine in position 32 of tRNA, to form 2-thiocytidine (s(2)C32). The sulfur atoms are provided by the cysteine/cysteine desulfurase (IscS) system. The protein is tRNA-cytidine(32) 2-sulfurtransferase of Citrifermentans bemidjiense (strain ATCC BAA-1014 / DSM 16622 / JCM 12645 / Bem) (Geobacter bemidjiensis).